The following is a 260-amino-acid chain: Thiazole synthase (260 aa).

Residue K96 is the Schiff-base intermediate with DXP of the active site. 1-deoxy-D-xylulose 5-phosphate-binding positions include G157, 184-185 (AG), and 206-207 (NT).

The protein belongs to the ThiG family. As to quaternary structure, homotetramer. Forms heterodimers with either ThiH or ThiS.

It localises to the cytoplasm. It carries out the reaction [ThiS sulfur-carrier protein]-C-terminal-Gly-aminoethanethioate + 2-iminoacetate + 1-deoxy-D-xylulose 5-phosphate = [ThiS sulfur-carrier protein]-C-terminal Gly-Gly + 2-[(2R,5Z)-2-carboxy-4-methylthiazol-5(2H)-ylidene]ethyl phosphate + 2 H2O + H(+). The protein operates within cofactor biosynthesis; thiamine diphosphate biosynthesis. Catalyzes the rearrangement of 1-deoxy-D-xylulose 5-phosphate (DXP) to produce the thiazole phosphate moiety of thiamine. Sulfur is provided by the thiocarboxylate moiety of the carrier protein ThiS. In vitro, sulfur can be provided by H(2)S. This Rhodopseudomonas palustris (strain BisA53) protein is Thiazole synthase.